The chain runs to 478 residues: MTKKVIRKPDSLHEVFERKGGSAPTATHYCAGCGHGILHKLIGEAIDELGIQERSVMISPVGCAVFAYYYFDCGNVQVAHGRAPAVGTGISRAEDTPVVLLYQGDGDLASIGLNETIQAANRGEKMAVFFVNNTVYGMTGGQMAPTTLIGEVTVTCPGGRDPRYAGYPLHMCELLDNLQAPVFIERVSLADPKSIRKAKRAVKRALEIQRDGKGYAFVEVLSPCPTNLRQDAEGAERFLKEEMEREFPVKNFRDRSSETEPLIRSESDFSRESLDRIFQIKEDSVPDPVDDPEFREVRVKIAGFGGQGVLSMGLTLAQAACSEGRHTSWYPAYGPEQRGGTSSCGVVISGERVGSPAVDTPDVLVAFNQPSLDEFAGDVREGGIVLYDTATADFSKKENLRAIGVPALEIAKEHGTGRAANTAMLGVMMALGITGLDEESFRDAIRFTFSGKDKIIDINLKILEAGADWARKNLEGEF.

Heterotrimer of the VorA, VorB and VorC subunits.

This is Ketoisovalerate oxidoreductase subunit VorA (vorA) from Methanothermobacter marburgensis (strain ATCC BAA-927 / DSM 2133 / JCM 14651 / NBRC 100331 / OCM 82 / Marburg) (Methanobacterium thermoautotrophicum).